Here is a 420-residue protein sequence, read N- to C-terminus: Serine hydroxymethyltransferase (420 aa).

Residues Leu121 and 125–127 (GHL) each bind (6S)-5,6,7,8-tetrahydrofolate. Position 230 is an N6-(pyridoxal phosphate)lysine (Lys230). 354 to 356 (SPF) is a (6S)-5,6,7,8-tetrahydrofolate binding site.

It belongs to the SHMT family. Homodimer. It depends on pyridoxal 5'-phosphate as a cofactor.

The protein resides in the cytoplasm. The catalysed reaction is (6R)-5,10-methylene-5,6,7,8-tetrahydrofolate + glycine + H2O = (6S)-5,6,7,8-tetrahydrofolate + L-serine. Its pathway is one-carbon metabolism; tetrahydrofolate interconversion. It participates in amino-acid biosynthesis; glycine biosynthesis; glycine from L-serine: step 1/1. Catalyzes the reversible interconversion of serine and glycine with tetrahydrofolate (THF) serving as the one-carbon carrier. This reaction serves as the major source of one-carbon groups required for the biosynthesis of purines, thymidylate, methionine, and other important biomolecules. Also exhibits THF-independent aldolase activity toward beta-hydroxyamino acids, producing glycine and aldehydes, via a retro-aldol mechanism. This chain is Serine hydroxymethyltransferase, found in Rickettsia africae (strain ESF-5).